Consider the following 391-residue polypeptide: Cold-shock protein CS120 (391 aa).

A run of 17 repeats spans residues 9–31, 49–62, 72–94, 95–108, 115–128, 135–148, 156–178, 179–192, 199–212, 220–242, 243–256, 263–276, 284–306, 307–320, 327–340, 350–363, and 374–391. Positions 9 to 391 are 6 X 23 AA approximate repeats; that stretch reads GEKKGIMEKI…KIKDKLPGQH (383 aa). The span at 21–33 shows a compositional bias: basic and acidic residues; the sequence is KLPGGHGDHKETA. The segment at 21 to 391 is disordered; it reads KLPGGHGDHK…KIKDKLPGQH (371 aa). Low complexity predominate over residues 34-59; the sequence is GTHGHPGTATHGAPATGGAYGQQGHA. Residues 49–363 are 11 X 14 AA approximate repeats; the sequence is TGGAYGQQGH…HGQHGHTGTT (315 aa). Positions 70 to 92 are enriched in basic and acidic residues; it reads HAGEKKGVMENIKDKLPGGHQDH. The segment covering 93–145 has biased composition (low complexity); sequence QQTGGTYGQQGHTGTATHGTPATGGTYGQQGHTGTATHGTPATGGTYGEQGHT. Positions 155 to 176 are enriched in basic and acidic residues; sequence TGEKKGVMENIKEKLPGGHGDH. Residues 177 to 196 are compositionally biased toward low complexity; the sequence is QQTGGTYGQQGHTGTATHGT. Residues 219–240 are compositionally biased toward basic and acidic residues; it reads TGEKKGVMENIKDKLPGGHGDH. Composition is skewed to low complexity over residues 241-260 and 272-282; these read QQTG…TQGT and HTGMTGAGTHS. The span at 283-304 shows a compositional bias: basic and acidic residues; that stretch reads TGEKKGVMENIKEKLPGGHSDH. Low complexity-rich tracts occupy residues 305–324 and 333–351; these read QQTG…THGT and QHGH…TATG. A compositionally biased stretch (gly residues) spans 361 to 372; it reads GTTGTGTHGSDG. Residues 373 to 391 are compositionally biased toward basic and acidic residues; it reads IGEKKSLMDKIKDKLPGQH.

The protein belongs to the plant dehydrin family.

Its function is as follows. May reduce intracellular freezing damage during winter by hydrogen-bonding to the lattice of the nascent ice crystals, thus modifying the structure and/or propagation of ice crystals. In Triticum aestivum (Wheat), this protein is Cold-shock protein CS120 (CS120).